Here is a 360-residue protein sequence, read N- to C-terminus: MKTSMQSKLDQLTTRLAELNDLLSRENVTADLDQYRKLTREHAEIGPVVEHYAQWRQARADELAAQELLADASMRDFAEDELRGARDRMGRLAAELQTMLLPKDPNDERNIFVEIRAGTGGDESALFAGNLLRMYLRYAERQRWQVEMMSESPSDLGGYKEVIVRIAGYGAYSRLKFESGGHRVQRVPATETQGRIHTSACTVAVMPEADEIGEVEINPADLRIDTFRASGAGGQHINKTDSAVRVTHIPTGIVVECQDDRSQHKNKDRALKVLAARIKDKQYHEQHAKEAATRKSLIGSGDRSERIRTYNFPQGRMTDHRINLTLYKLEQIMDGDLDELIAALVSEHQAELLASLGDAE.

At Gln235 the chain carries N5-methylglutamine.

Belongs to the prokaryotic/mitochondrial release factor family. Post-translationally, methylated by PrmC. Methylation increases the termination efficiency of RF1.

Its subcellular location is the cytoplasm. Its function is as follows. Peptide chain release factor 1 directs the termination of translation in response to the peptide chain termination codons UAG and UAA. This Burkholderia mallei (strain NCTC 10247) protein is Peptide chain release factor 1.